The primary structure comprises 449 residues: Tubulin alpha-2 chain (449 aa).

Gln11 serves as a coordination point for GTP. Lys40 is modified (N6-acetyllysine). GTP contacts are provided by Glu71, Ser140, Gly144, Thr145, Thr179, Asn206, and Asn228. Glu71 is a binding site for Mg(2+). Glu254 is an active-site residue.

It belongs to the tubulin family. Dimer of alpha and beta chains. A typical microtubule is a hollow water-filled tube with an outer diameter of 25 nm and an inner diameter of 15 nM. Alpha-beta heterodimers associate head-to-tail to form protofilaments running lengthwise along the microtubule wall with the beta-tubulin subunit facing the microtubule plus end conferring a structural polarity. Microtubules usually have 13 protofilaments but different protofilament numbers can be found in some organisms and specialized cells. Requires Mg(2+) as cofactor. Post-translationally, undergoes a tyrosination/detyrosination cycle, the cyclic removal and re-addition of a C-terminal tyrosine residue by the enzymes tubulin tyrosine carboxypeptidase (TTCP) and tubulin tyrosine ligase (TTL), respectively. Acetylation of alpha chains at Lys-40 stabilizes microtubules and affects affinity and processivity of microtubule motors. This modification has a role in multiple cellular functions, ranging from cell motility, cell cycle progression or cell differentiation to intracellular trafficking and signaling. During the early stages of oogenesis lky/Alpha-tubulin N-acetyltransferase 2 is the main acetyltransferase responsible for Lys-40 acetylation in germline cells while Atat/alpha-tubulin N-acetyltransferase 1 is the main acetyltransferase responsible for Lys-40 acetylation in somatic cells.

It localises to the cytoplasm. Its subcellular location is the cytoskeleton. The enzyme catalyses GTP + H2O = GDP + phosphate + H(+). In terms of biological role, tubulin is the major constituent of microtubules, a cylinder consisting of laterally associated linear protofilaments composed of alpha- and beta-tubulin heterodimers. Microtubules grow by the addition of GTP-tubulin dimers to the microtubule end, where a stabilizing cap forms. Below the cap, tubulin dimers are in GDP-bound state, owing to GTPase activity of alpha-tubulin. This Drosophila melanogaster (Fruit fly) protein is Tubulin alpha-2 chain (alphaTub85E).